The chain runs to 994 residues: Regulator of telomere elongation helicase 1 homolog (994 aa).

Residues 15-324 (SKTSIKFPFE…KLIENLRTED (310 aa)) enclose the Helicase ATP-binding domain. An ATP-binding site is contributed by 50–57 (SPTGTGKT). Positions 142, 160, 169, and 208 each coordinate [4Fe-4S] cluster. Positions 251–254 (DEAH) match the DEAH box motif. Positions 818–831 (KIEKKEKIEPRPIK) are enriched in basic and acidic residues. Residues 818 to 896 (KIEKKEKIEP…HVVSGSEPPK (79 aa)) are disordered. Over residues 833-844 (DSSSSSVFSLPT) the composition is skewed to polar residues. The segment covering 847–856 (DELKVKKWEQ) has biased composition (basic and acidic residues). 2 stretches are compositionally biased toward polar residues: residues 859–869 (DSQTNVSSSSD) and 880–889 (PGNSSGQHVV).

Belongs to the helicase family. RAD3/XPD subfamily.

The protein resides in the nucleus. The catalysed reaction is ATP + H2O = ADP + phosphate + H(+). In terms of biological role, a probable ATP-dependent DNA helicase implicated in DNA repair and the maintenance of genomic stability. Acts as an anti-recombinase to counteract toxic recombination and limit crossover during meiosis. Regulates meiotic recombination and crossover homeostasis by physically dissociating strand invasion events and thereby promotes noncrossover repair by meiotic synthesis dependent strand annealing (SDSA) as well as disassembly of D loop recombination intermediates. This Caenorhabditis briggsae protein is Regulator of telomere elongation helicase 1 homolog.